Consider the following 235-residue polypeptide: 7-cyano-7-deazaguanine synthase (235 aa).

ATP is bound at residue 12–22 (FSGGQDSTACL). Residues Cys200, Cys215, Cys218, and Cys221 each contribute to the Zn(2+) site.

This sequence belongs to the QueC family. Zn(2+) serves as cofactor.

It carries out the reaction 7-carboxy-7-deazaguanine + NH4(+) + ATP = 7-cyano-7-deazaguanine + ADP + phosphate + H2O + H(+). It functions in the pathway purine metabolism; 7-cyano-7-deazaguanine biosynthesis. Its function is as follows. Catalyzes the ATP-dependent conversion of 7-carboxy-7-deazaguanine (CDG) to 7-cyano-7-deazaguanine (preQ(0)). This Methylibium petroleiphilum (strain ATCC BAA-1232 / LMG 22953 / PM1) protein is 7-cyano-7-deazaguanine synthase.